The following is a 231-amino-acid chain: Transcriptional regulatory protein KdpE (231 aa).

The 114-residue stretch at 4–117 folds into the Response regulatory domain; that stretch reads KILIIEDDHA…ELRARIRVIE (114 aa). Asp53 bears the 4-aspartylphosphate mark. Positions 127 to 227 form a DNA-binding region, ompR/PhoB-type; that stretch reads NIVFTNGLLS…HPRIGYQMLQ (101 aa).

In terms of processing, phosphorylated by KdpD. Phosphorylation is required for transcriptional activity.

Functionally, member of the two-component regulatory system KdpD/KdpE that regulates the transcription of a series of virulence factors through sensing external K(+) concentrations. Also regulates capsular polysaccharide synthesis. Upon phosphorylation by KpdD, functions as a transcriptional regulator by direct binding to promoter regions of target genes including spa, hla, aur and geh. Represses the transcription of kdpFABC operon. The sequence is that of Transcriptional regulatory protein KdpE from Staphylococcus aureus (strain NCTC 8325 / PS 47).